The primary structure comprises 418 residues: MLKKDMNIADYDPQLFAAIEDETRRQEEHIELIASENYTSPRVIEAQGTQLTNKYAEGYPGKRYYGGCEHVDIVEELAISRAKELFGATYANVQPHSGSQANAAVFMALLEGGDTVLGMSLAHGGHLTHGSHVSFSGKLYNAVQYGIDESTGKIDYAEVERLAVEHKPKMIIAGFSAYSGIVDWGKFREIADKVGAYLFVDMAHVAGLVAAGIYPNPLPHAHVVTTTTHKTLAGPRGGLILSAIDDEAIYKKLNSAVFPGGQGGPLMHVIAAKAVAFKEALDPEFTTYQEQVVVNAKAMARTFIERGYDVVSGGTDNHLFLLDLISKDMTGKDADAALGNANITVNKNSVPNDPRSPFVTSGLRIGSPAITRRGFGEQESVLLTNWMCDVLDDISDLAVSERVKAQVLELCAKFPVYG.

Residues L121 and G125–L127 contribute to the (6S)-5,6,7,8-tetrahydrofolate site. K230 is subject to N6-(pyridoxal phosphate)lysine. S356–F358 lines the (6S)-5,6,7,8-tetrahydrofolate pocket.

This sequence belongs to the SHMT family. In terms of assembly, homodimer. It depends on pyridoxal 5'-phosphate as a cofactor.

It is found in the cytoplasm. The catalysed reaction is (6R)-5,10-methylene-5,6,7,8-tetrahydrofolate + glycine + H2O = (6S)-5,6,7,8-tetrahydrofolate + L-serine. It participates in one-carbon metabolism; tetrahydrofolate interconversion. Its pathway is amino-acid biosynthesis; glycine biosynthesis; glycine from L-serine: step 1/1. Catalyzes the reversible interconversion of serine and glycine with tetrahydrofolate (THF) serving as the one-carbon carrier. This reaction serves as the major source of one-carbon groups required for the biosynthesis of purines, thymidylate, methionine, and other important biomolecules. Also exhibits THF-independent aldolase activity toward beta-hydroxyamino acids, producing glycine and aldehydes, via a retro-aldol mechanism. The sequence is that of Serine hydroxymethyltransferase from Shewanella piezotolerans (strain WP3 / JCM 13877).